The sequence spans 427 residues: Enolase (427 aa).

(2R)-2-phosphoglycerate is bound at residue Gln163. Glu205 (proton donor) is an active-site residue. Mg(2+) contacts are provided by Asp242, Glu285, and Asp312. Lys337, Arg366, Ser367, and Lys388 together coordinate (2R)-2-phosphoglycerate. Catalysis depends on Lys337, which acts as the Proton acceptor.

This sequence belongs to the enolase family. Mg(2+) serves as cofactor.

The protein localises to the cytoplasm. Its subcellular location is the secreted. It is found in the cell surface. It carries out the reaction (2R)-2-phosphoglycerate = phosphoenolpyruvate + H2O. The protein operates within carbohydrate degradation; glycolysis; pyruvate from D-glyceraldehyde 3-phosphate: step 4/5. Catalyzes the reversible conversion of 2-phosphoglycerate (2-PG) into phosphoenolpyruvate (PEP). It is essential for the degradation of carbohydrates via glycolysis. This Rhodopseudomonas palustris (strain BisB5) protein is Enolase.